The primary structure comprises 706 residues: Translation initiation factor IF-2 (706 aa).

Basic and acidic residues predominate over residues 55 to 81; that stretch reads AKETANEKPAEQKKQSSNKINDRKKND. A disordered region spans residues 55–127; it reads AKETANEKPA…KPKKELPEKI (73 aa). A compositionally biased stretch (low complexity) spans 82–98; the sequence is VQNNQFNKNKKNNNQNK. Positions 207–376 constitute a tr-type G domain; it reads VRPPVVTIMG…LLVSEVGELK (170 aa). A G1 region spans residues 216 to 223; that stretch reads GHVDHGKT. 216 to 223 provides a ligand contact to GTP; it reads GHVDHGKT. The interval 241-245 is G2; the sequence is GITQH. Residues 262–265 form a G3 region; the sequence is DTPG. GTP-binding positions include 262–266 and 316–319; these read DTPGH and NKID. Residues 316-319 are G4; that stretch reads NKID. The G5 stretch occupies residues 352–354; that stretch reads SAK.

Belongs to the TRAFAC class translation factor GTPase superfamily. Classic translation factor GTPase family. IF-2 subfamily.

Its subcellular location is the cytoplasm. One of the essential components for the initiation of protein synthesis. Protects formylmethionyl-tRNA from spontaneous hydrolysis and promotes its binding to the 30S ribosomal subunits. Also involved in the hydrolysis of GTP during the formation of the 70S ribosomal complex. The protein is Translation initiation factor IF-2 of Bacillus pumilus (strain SAFR-032).